Reading from the N-terminus, the 572-residue chain is Glypican-5 (572 aa).

Positions 1–24 (MDARTWRLGWRCLLLLALLGSTRS) are cleaved as a signal peptide. N-linked (GlcNAc...) asparagine glycosylation is found at Asn-120 and Asn-237. Ser-486 is a glycosylation site (O-linked (Xyl...) (glycosaminoglycan) serine). An N-linked (GlcNAc...) asparagine glycan is attached at Asn-493. O-linked (Xyl...) (glycosaminoglycan) serine glycans are attached at residues Ser-495, Ser-507, and Ser-509. Asn-527 carries N-linked (GlcNAc...) asparagine glycosylation.

It belongs to the glypican family.

Its subcellular location is the cell membrane. The protein localises to the secreted. It localises to the extracellular space. Cell surface proteoglycan that bears heparan sulfate. In Mus musculus (Mouse), this protein is Glypican-5 (Gpc5).